A 396-amino-acid chain; its full sequence is Phosphoglycerate kinase (396 aa).

Residues 21–23 (DFN), Arg36, 59–62 (HLGK), Arg119, and Arg156 contribute to the substrate site. ATP-binding positions include Lys206, Gly294, Glu325, and 352-355 (GGDS).

Belongs to the phosphoglycerate kinase family. Monomer.

Its subcellular location is the cytoplasm. The catalysed reaction is (2R)-3-phosphoglycerate + ATP = (2R)-3-phospho-glyceroyl phosphate + ADP. Its pathway is carbohydrate degradation; glycolysis; pyruvate from D-glyceraldehyde 3-phosphate: step 2/5. The sequence is that of Phosphoglycerate kinase from Listeria monocytogenes serovar 1/2a (strain ATCC BAA-679 / EGD-e).